The following is a 696-amino-acid chain: Polyribonucleotide nucleotidyltransferase (696 aa).

Mg(2+) is bound by residues D486 and D492. One can recognise a KH domain in the interval 553-612 (PRITQKQIPKDRIGELIGPGGKMIRAIIEQSGSEISVDDSGKVTIASPSEESKEKAIAMI). The S1 motif domain maps to 622 to 690 (GKIYDGVIKR…KMGKIDLSRK (69 aa)).

Belongs to the polyribonucleotide nucleotidyltransferase family. The cofactor is Mg(2+).

It is found in the cytoplasm. It catalyses the reaction RNA(n+1) + phosphate = RNA(n) + a ribonucleoside 5'-diphosphate. Its function is as follows. Involved in mRNA degradation. Catalyzes the phosphorolysis of single-stranded polyribonucleotides processively in the 3'- to 5'-direction. In Leptospira biflexa serovar Patoc (strain Patoc 1 / ATCC 23582 / Paris), this protein is Polyribonucleotide nucleotidyltransferase.